The following is a 462-amino-acid chain: MAHRTWGGRFGEGPDALAARFNASLAFDRALWREDLWQNRVHARMLHAVGLLSAEELEAILKGLDRIEEEIEAGTFPWREELEDVHMNLEARLTELVGPPGGKLHTARSRNDQVATDLRLYLRGAIDELLALLLALRRVLVREAEKHLDPLYVLPGYTHLQRAQPVLLAHWFLAYYEMLKRDAGRLEDAKERLNESPLGAAALAGTGFPIDRHFTARELGFKAPMRNSLDAVASRDFALEVLSALNIGMLHLSRMAEELILYSTEEFGFVEVPDAFATGSSIMPQKKNPDILELIRAKAGRVLGALVGLSAVVKGLPLAYNKDLQEDKEPLLDALATYRDSLRLLAALLPGLKWRRERMWRAAEGGYTLATELADYLAEKGLPFREAHHVVGRLVRRLVEEGRALKDLTLEELQAHHPLFAEDALPLLRLETAIHRRRSYGGTAPEAVRERLEEAKKEVGLD.

It belongs to the lyase 1 family. Argininosuccinate lyase subfamily.

It is found in the cytoplasm. It carries out the reaction 2-(N(omega)-L-arginino)succinate = fumarate + L-arginine. It functions in the pathway amino-acid biosynthesis; L-arginine biosynthesis; L-arginine from L-ornithine and carbamoyl phosphate: step 3/3. The sequence is that of Argininosuccinate lyase from Thermus thermophilus (strain ATCC BAA-163 / DSM 7039 / HB27).